The chain runs to 320 residues: MNTPAVRFAARTVRVKAPGKINVSLDVGPRRPDGYHSVASVYLAVSLYEEVAATSTETPGITVSLSPDSTLDLDAVDIPLDASNLAYRAAAIMADVSEHATGVHLEITKRVPVAGGMGGGSADAAATLLACDALWNSGLSREELAHLAAELGADVPFSLLGGTAVGLGVGDQLSPALAKAKTHWVLVTADFGLSTPEVFRTLDRLREAEGVDADEPTGVDPNILAALRGGDADALSRILVNDLQRASIELAPSLRDTLGIGESHGAIAGIVSGSGPTVALLADDSVAAEALAEDLQHQGLSALAVHGPVPGARIISDTLL.

The active site involves Lys-20. 112–122 (PVAGGMGGGSA) lines the ATP pocket. Residue Asp-154 is part of the active site.

Belongs to the GHMP kinase family. IspE subfamily.

It carries out the reaction 4-CDP-2-C-methyl-D-erythritol + ATP = 4-CDP-2-C-methyl-D-erythritol 2-phosphate + ADP + H(+). It participates in isoprenoid biosynthesis; isopentenyl diphosphate biosynthesis via DXP pathway; isopentenyl diphosphate from 1-deoxy-D-xylulose 5-phosphate: step 3/6. Its function is as follows. Catalyzes the phosphorylation of the position 2 hydroxy group of 4-diphosphocytidyl-2C-methyl-D-erythritol. The polypeptide is 4-diphosphocytidyl-2-C-methyl-D-erythritol kinase (Pseudarthrobacter chlorophenolicus (strain ATCC 700700 / DSM 12829 / CIP 107037 / JCM 12360 / KCTC 9906 / NCIMB 13794 / A6) (Arthrobacter chlorophenolicus)).